The primary structure comprises 204 residues: Methylthioribulose-1-phosphate dehydratase (204 aa).

Residues His96 and His98 each coordinate Zn(2+).

It belongs to the aldolase class II family. MtnB subfamily. Zn(2+) is required as a cofactor.

It carries out the reaction 5-(methylsulfanyl)-D-ribulose 1-phosphate = 5-methylsulfanyl-2,3-dioxopentyl phosphate + H2O. Its pathway is amino-acid biosynthesis; L-methionine biosynthesis via salvage pathway; L-methionine from S-methyl-5-thio-alpha-D-ribose 1-phosphate: step 2/6. In terms of biological role, catalyzes the dehydration of methylthioribulose-1-phosphate (MTRu-1-P) into 2,3-diketo-5-methylthiopentyl-1-phosphate (DK-MTP-1-P). The protein is Methylthioribulose-1-phosphate dehydratase of Methylococcus capsulatus (strain ATCC 33009 / NCIMB 11132 / Bath).